The following is a 179-amino-acid chain: Large ribosomal subunit protein bL17 (179 aa).

The span at Lys123–Thr161 shows a compositional bias: basic and acidic residues. A disordered region spans residues Lys123–Ser179. The span at Asp162–Arg171 shows a compositional bias: polar residues.

The protein belongs to the bacterial ribosomal protein bL17 family. Part of the 50S ribosomal subunit. Contacts protein L32.

This is Large ribosomal subunit protein bL17 from Treponema denticola (strain ATCC 35405 / DSM 14222 / CIP 103919 / JCM 8153 / KCTC 15104).